A 346-amino-acid chain; its full sequence is MSAMTRVSEVIIGIVSAGVVSALVFPRYTGEQMRTTVRKRFGSFVDYVASALSGQLDRAHIETIHTRFAYVVGFEAARSMAVFEDPDTRMRSGRLARLNSEFMSASSRFHALHQLMNRLHAAGAQAAIDAIEPYFREIAPLLTRNGEPVRTSIDAAHSAEQLLAWRDALPRRIRATRAELETQPDFPLLDFDTAAELLYRFITDLQEYAATYASLATATHERERWIERYEPRTNKTAATIAGIRTATVILALGWFWIETAWPSGVMLVLNAAATCALASSAPRPTAMAAQMGMGTALAVCTGFLLTFGIYPRIDGFVLLCAALAPLLAIGIYMSLKPKLAGYGGAI.

Transmembrane regions (helical) follow at residues 10–30 (VIIG…RYTG), 248–268 (VILA…VMLV), 291–311 (MGMG…GIYP), and 315–335 (GFVL…YMSL).

Belongs to the aromatic acid exporter ArAE (TC 2.A.85) family.

It is found in the cell membrane. Its function is as follows. Involved in the resistance (detoxification) of the fungal toxin fusaric acid. The protein is Fusaric acid resistance protein FusC (fusC) of Burkholderia cepacia (Pseudomonas cepacia).